The following is a 126-amino-acid chain: Acidic phospholipase A2 3 (126 aa).

Positions 1-7 are excised as a propeptide; sequence SNRPMPL. Disulfide bonds link Cys18–Cys78, Cys33–Cys125, Cys35–Cys51, Cys50–Cys106, Cys57–Cys99, Cys67–Cys92, and Cys85–Cys97. Residues Tyr34, Gly36, and Gly38 each coordinate Ca(2+). His54 is an active-site residue. A Ca(2+)-binding site is contributed by Asp55. Asp100 is a catalytic residue.

This sequence belongs to the phospholipase A2 family. Group I subfamily. D49 sub-subfamily. The cofactor is Ca(2+). In terms of tissue distribution, expressed by the venom gland.

It is found in the secreted. The enzyme catalyses a 1,2-diacyl-sn-glycero-3-phosphocholine + H2O = a 1-acyl-sn-glycero-3-phosphocholine + a fatty acid + H(+). In terms of biological role, PLA2 catalyzes the calcium-dependent hydrolysis of the 2-acyl groups in 3-sn-phosphoglycerides. This Naja sagittifera (Andaman cobra) protein is Acidic phospholipase A2 3.